Here is a 433-residue protein sequence, read N- to C-terminus: Alpha-(1,3)-fucosyltransferase 4 (433 aa).

Residues 1-20 (MAPAGRKLQHESRCRPSRPV) form a disordered region. Residues 1–54 (MAPAGRKLQHESRCRPSRPVDAWRAAATTRGRCMGTPGARRTARRGGWGLPRTS) lie on the Cytoplasmic side of the membrane. Residues 55-74 (SGLAAAGLLCTALTACLCWG) form a helical; Signal-anchor for type II membrane protein membrane-spanning segment. Residues 75–433 (QLPPLPWASP…IHNLADWFQR (359 aa)) are Lumenal-facing. Residues Asn117 and Asn218 are each glycosylated (N-linked (GlcNAc...) asparagine).

It belongs to the glycosyltransferase 10 family. In terms of tissue distribution, in adult, highest expression in spleen, testis, brain, lung, kidney and skeletal muscle and to a lesser extent in liver and heart.

It localises to the golgi apparatus. Its subcellular location is the golgi stack membrane. It carries out the reaction a beta-D-galactosyl-(1-&gt;4)-N-acetyl-beta-D-glucosaminyl derivative + GDP-beta-L-fucose = a beta-D-galactosyl-(1-&gt;4)-[alpha-L-fucosyl-(1-&gt;3)]-N-acetyl-beta-D-glucosaminyl derivative + GDP + H(+). The enzyme catalyses an N-acetyl-alpha-neuraminyl-(2-&gt;3)-beta-D-galactosyl-(1-&gt;4)-N-acetyl-beta-D-glucosaminyl derivative + GDP-beta-L-fucose = an alpha-Neu5Ac-(2-&gt;3)-beta-D-Gal-(1-&gt;4)-[alpha-L-Fuc-(1-&gt;3)]-beta-D-GlcNAc derivative + GDP + H(+). The catalysed reaction is an alpha-Neu5Ac-(2-&gt;3)-beta-D-Gal-(1-&gt;4)-beta-D-GlcNAc-(1-&gt;3)-beta-D-Gal-(1-&gt;4)-beta-D-GlcNAc derivative + GDP-beta-L-fucose = an alpha-Neu5Ac-(2-&gt;3)-beta-D-Gal-(1-&gt;4)-beta-D-GlcNAc-(1-&gt;3)-beta-D-Gal-(1-&gt;4)-[alpha-L-Fuc-(1-&gt;3)]-beta-D-GlcNAc derivative + GDP + H(+). It catalyses the reaction an alpha-Neu5Ac-(2-&gt;3)-beta-D-Gal-(1-&gt;4)-beta-D-GlcNAc6S derivative + GDP-beta-L-fucose = an alpha-Neu5Ac-(2-&gt;3)-beta-D-Gal-(1-&gt;4)-[alpha-L-Fuc-(1-&gt;3)]-beta-D-GlcNAc6S derivative + GDP + H(+). Its pathway is protein modification; protein glycosylation. In terms of biological role, catalyzes alpha(1-&gt;3) linkage of fucosyl moiety transferred from GDP-beta-L-fucose to N-acetyl glucosamine (GlcNAc) within type 2 lactosamine (LacNAc, Gal-beta(1-&gt;4)GlcNAc) glycan attached to N- or O-linked glycoproteins. Robustly fucosylates nonsialylated distal LacNAc unit of the polylactosamine chain to form Lewis X antigen (CD15), a glycan determinant known to mediate important cellular functions in development and immunity. Fucosylates with lower efficiency sialylated LacNAc acceptors to form sialyl Lewis X and 6-sulfo sialyl Lewis X determinants that serve as recognition epitopes for C-type lectins. Together with FUT7 contributes to SELE, SELL and SELP selectin ligand biosynthesis and selectin-dependent lymphocyte homing, leukocyte migration and blood leukocyte homeostasis. In a cell type specific manner, may also fucosylate the internal LacNAc unit of the polylactosamine chain to form VIM-2 antigen that serves as recognition epitope for SELE. This Rattus norvegicus (Rat) protein is Alpha-(1,3)-fucosyltransferase 4 (Fut4).